A 206-amino-acid polypeptide reads, in one-letter code: Small ribosomal subunit protein uS4 (206 aa).

Residues 96 to 157 (SRLDNVVYRM…KAKKQVRIQE (62 aa)) form the S4 RNA-binding domain.

Belongs to the universal ribosomal protein uS4 family. As to quaternary structure, part of the 30S ribosomal subunit. Contacts protein S5. The interaction surface between S4 and S5 is involved in control of translational fidelity.

Its function is as follows. One of the primary rRNA binding proteins, it binds directly to 16S rRNA where it nucleates assembly of the body of the 30S subunit. In terms of biological role, with S5 and S12 plays an important role in translational accuracy. This chain is Small ribosomal subunit protein uS4, found in Neisseria gonorrhoeae (strain ATCC 700825 / FA 1090).